The chain runs to 333 residues: Perchlorate reductase subunit beta (333 aa).

The region spanning 12–40 (LTYVTDLNKCIGCQTCTVACKKLWTTGPG) is the 4Fe-4S ferredoxin-type 1 domain. Residues cysteine 21, cysteine 24, cysteine 27, and cysteine 31 each contribute to the [4Fe-4S] cluster site. Positions 101–121 (KERVRPSPTPRSAPNWDEDQG) are disordered. 2 4Fe-4S ferredoxin-type domains span residues 128–159 (NSFF…KREQ) and 161–190 (GIVV…FNPV). Residues cysteine 137, cysteine 140, and cysteine 145 each contribute to the [4Fe-4S] cluster site. 3 residues coordinate [3Fe-4S] cluster: cysteine 149, cysteine 170, and cysteine 176. Residues cysteine 180, cysteine 197, cysteine 200, cysteine 212, and cysteine 216 each coordinate [4Fe-4S] cluster.

As to quaternary structure, heterotrimer of alpha, beta and gamma subunits. It depends on [3Fe-4S] cluster as a cofactor. The cofactor is [4Fe-4S] cluster.

The protein resides in the periplasm. Functionally, component of the perchlorate reductase that catalyzes the reduction of perchlorate to chlorite and allows anaerobic growth on perchlorate as the sole electron acceptor. The beta subunit may be responsible for electron transfer to the catalytic alpha subunit PcrA. The protein is Perchlorate reductase subunit beta (pcrB) of Dechloromonas aromatica (strain RCB).